A 398-amino-acid chain; its full sequence is Alpha-2,8-sialyltransferase 8F (398 aa).

The Cytoplasmic portion of the chain corresponds to 1–3; that stretch reads MRS. The helical; Signal-anchor for type II membrane protein transmembrane segment at 4 to 24 threads the bilayer; sequence GGTLFALIGSLMLLLLLRMLW. At 25 to 398 the chain is on the lumenal side; it reads CPADAPARSR…KLQFSKCETA (374 aa). N-linked (GlcNAc...) asparagine glycans are attached at residues Asn-66, Asn-93, Asn-151, and Asn-196. Cystine bridges form between Cys-186–Cys-335 and Cys-200–Cys-395. Substrate is bound by residues Asn-214, 236–238, and 322–324; these read NPS and STG. The active-site Proton donor/acceptor is His-370.

The protein belongs to the glycosyltransferase 29 family. In terms of tissue distribution, highly expressed in kidney and expressed and all tissues tested.

It localises to the golgi apparatus membrane. It catalyses the reaction a ganglioside GM3 + CMP-N-acetyl-beta-neuraminate = a ganglioside GD3 + CMP + H(+). The catalysed reaction is a ganglioside GM3 (d18:1(4E)) + CMP-N-acetyl-beta-neuraminate = a ganglioside GD3 (d18:1(4E)) + CMP + H(+). It carries out the reaction a ganglioside GD1a (d18:1(4E)) + CMP-N-acetyl-beta-neuraminate = a ganglioside GT1a (d18:1(4E)) + CMP + H(+). The enzyme catalyses a ganglioside GD1a + CMP-N-acetyl-beta-neuraminate = a ganglioside GT1a + CMP + H(+). It catalyses the reaction a ganglioside GM1b (d18:1(4E)) + CMP-N-acetyl-beta-neuraminate = a ganglioside GD1c (d18:1(4E)) + CMP + H(+). The catalysed reaction is a ganglioside GM1b + CMP-N-acetyl-beta-neuraminate = a ganglioside GD1c + CMP + H(+). It carries out the reaction a ganglioside GM4 (d18:1(4E)) + CMP-N-acetyl-beta-neuraminate = an N-acetyl-alpha-neuraminosyl-(2-&gt;8)-N-acetyl-alpha-neuraminosyl-(2-&gt;3)-beta-D-galactosyl-(1&lt;-&gt;1')-N-acylsphing-4-enine + CMP + H(+). The enzyme catalyses N-acetyl-alpha-neuraminosyl-(2-&gt;3)-beta-D-galactosyl-(1&lt;-&gt;1')-ceramide + CMP-N-acetyl-beta-neuraminate = N-acetyl-alpha-neuraminosyl-(2-&gt;8)-N-acetyl-alpha-neuraminosyl-(2-&gt;3)-beta-D-galactosyl-(1&lt;-&gt;1')-ceramide + CMP + H(+). It catalyses the reaction a ganglioside GT1b (d18:1(4E)) + CMP-N-acetyl-beta-neuraminate = a ganglioside GQ1b (d18:1(4E)) + CMP + H(+). The catalysed reaction is a ganglioside GT1b + CMP-N-acetyl-beta-neuraminate = a ganglioside GQ1b + CMP + H(+). It participates in protein modification; protein glycosylation. Alpha-2,8-sialyltransferase that prefers O-glycans to N-glycans or glycolipids as acceptor substrates. The minimal acceptor substrate is the NeuAc-alpha-2,3(6)-Gal sequence at the non-reducing end of their carbohydrate groups. The polypeptide is Alpha-2,8-sialyltransferase 8F (Mus musculus (Mouse)).